Reading from the N-terminus, the 184-residue chain is Ribosome-recycling factor (184 aa).

It belongs to the RRF family.

It is found in the cytoplasm. In terms of biological role, responsible for the release of ribosomes from messenger RNA at the termination of protein biosynthesis. May increase the efficiency of translation by recycling ribosomes from one round of translation to another. The protein is Ribosome-recycling factor of Acinetobacter baylyi (strain ATCC 33305 / BD413 / ADP1).